Reading from the N-terminus, the 194-residue chain is Probable molybdenum cofactor guanylyltransferase (194 aa).

Residues 8-10 (LAG), lysine 20, and aspartate 99 contribute to the GTP site. Aspartate 99 provides a ligand contact to Mg(2+).

It belongs to the MobA family. Mg(2+) serves as cofactor.

It localises to the cytoplasm. The enzyme catalyses Mo-molybdopterin + GTP + H(+) = Mo-molybdopterin guanine dinucleotide + diphosphate. In terms of biological role, transfers a GMP moiety from GTP to Mo-molybdopterin (Mo-MPT) cofactor (Moco or molybdenum cofactor) to form Mo-molybdopterin guanine dinucleotide (Mo-MGD) cofactor. The sequence is that of Probable molybdenum cofactor guanylyltransferase from Synechococcus elongatus (strain ATCC 33912 / PCC 7942 / FACHB-805) (Anacystis nidulans R2).